Reading from the N-terminus, the 175-residue chain is MEKISVSAFLLLVALSYTLARDTTVKPAAKKDTKDSRPKLPQTLSRGWGDQLIWTQTYEEALYKSKTSNKPLMIIHHLDECPHSQALKKVFAENKEIQKLAEQFVLLNLVYETTDKHLSPDGQYVPRIMFVDPSLTVRADITGRYSNRLYAYEPTDTALLLDNMKKALKLLKTEL.

Residues 1 to 20 (MEKISVSAFLLLVALSYTLA) form the signal peptide. The segment at 21-40 (RDTTVKPAAKKDTKDSRPKL) is required to promote cell adhesion. Short sequence motifs (homodimer stabilization; interchain) lie at residues 45–54 (SRGWGDQLIW) and 60–67 (EALYKSKT).

It belongs to the AGR family. In terms of assembly, monomer and homodimer. Interacts with LYPD3 and DAG1 (alphaDAG1). Interacts with MUC2; disulfide-linked.

The protein localises to the secreted. Its subcellular location is the endoplasmic reticulum. Required for MUC2 post-transcriptional synthesis and secretion. May play a role in the production of mucus by intestinal cells. Proto-oncogene that may play a role in cell migration, cell differentiation and cell growth. Promotes cell adhesion. The chain is Anterior gradient protein 2 homolog (AGR2) from Pongo abelii (Sumatran orangutan).